Reading from the N-terminus, the 492-residue chain is Glutamyl-tRNA(Gln) amidotransferase subunit A (492 aa).

Residues Lys-79 and Ser-154 each act as charge relay system in the active site. Residue Ser-178 is the Acyl-ester intermediate of the active site.

Belongs to the amidase family. GatA subfamily. In terms of assembly, heterotrimer of A, B and C subunits.

It catalyses the reaction L-glutamyl-tRNA(Gln) + L-glutamine + ATP + H2O = L-glutaminyl-tRNA(Gln) + L-glutamate + ADP + phosphate + H(+). Allows the formation of correctly charged Gln-tRNA(Gln) through the transamidation of misacylated Glu-tRNA(Gln) in organisms which lack glutaminyl-tRNA synthetase. The reaction takes place in the presence of glutamine and ATP through an activated gamma-phospho-Glu-tRNA(Gln). The protein is Glutamyl-tRNA(Gln) amidotransferase subunit A of Desulforudis audaxviator (strain MP104C).